Consider the following 348-residue polypeptide: D-alanine--D-alanine ligase (348 aa).

In terms of domain architecture, ATP-grasp spans lysine 132–valine 334. ATP is bound at residue leucine 162–glutamate 217. Mg(2+)-binding residues include aspartate 288, glutamate 301, and asparagine 303.

It belongs to the D-alanine--D-alanine ligase family. The cofactor is Mg(2+). Mn(2+) is required as a cofactor.

The protein resides in the cytoplasm. The enzyme catalyses 2 D-alanine + ATP = D-alanyl-D-alanine + ADP + phosphate + H(+). It functions in the pathway cell wall biogenesis; peptidoglycan biosynthesis. Cell wall formation. In Streptococcus thermophilus (strain ATCC BAA-250 / LMG 18311), this protein is D-alanine--D-alanine ligase.